The following is a 172-amino-acid chain: Protein nemuri (172 aa).

The first 25 residues, 1-25 (MSAKYTLIFALAALCCLVFSTEAAA), serve as a signal peptide directing secretion. Residues 27-172 (RSRVLSSRRG…KRRSGKGNKA (146 aa)) are disordered. Basic and acidic residues-rich tracts occupy residues 35-50 (RGSE…KEDS), 58-90 (DLER…DKET), and 97-108 (TIVKPNKDDARA). Residues 45–74 (DNKEDSELAAQEQDLERQEQEEQNDRLEGR) are a coiled coil. Positions 109-172 (RRIVRAGRRR…KRRSGKGNKA (64 aa)) are enriched in basic residues.

Detected in the brain where it accumulates in the dorsal fan-shaped body following sleep deprivation (at protein level). Expressed in the adult body.

Its subcellular location is the secreted. In terms of biological role, antimicrobial protein which is essential for the homeostatic regulation of sleep. Promotes sleep following sleep deprivation or bacterial infection and increases survival following bacterial infection. Likely to promote survival to bacterial infection in two ways; by contributing to the innate immune response and by promoting sleep during sickness to aid recovery. This Drosophila melanogaster (Fruit fly) protein is Protein nemuri.